The chain runs to 253 residues: Probable transcriptional regulatory protein RPR_05505 (253 aa).

Belongs to the TACO1 family.

It is found in the cytoplasm. This Rickettsia peacockii (strain Rustic) protein is Probable transcriptional regulatory protein RPR_05505.